The sequence spans 169 residues: Endoribonuclease YbeY (169 aa).

Residues H130, H134, and H140 each coordinate Zn(2+).

It belongs to the endoribonuclease YbeY family. Requires Zn(2+) as cofactor.

The protein resides in the cytoplasm. Single strand-specific metallo-endoribonuclease involved in late-stage 70S ribosome quality control and in maturation of the 3' terminus of the 16S rRNA. The protein is Endoribonuclease YbeY of Neisseria meningitidis serogroup B (strain ATCC BAA-335 / MC58).